A 199-amino-acid polypeptide reads, in one-letter code: Dephospho-CoA kinase (199 aa).

Positions 4–199 constitute a DPCK domain; sequence VIGLTGGIAS…DNVLQKWNIS (196 aa). 12-17 contacts ATP; the sequence is ASGKST.

The protein belongs to the CoaE family.

Its subcellular location is the cytoplasm. The enzyme catalyses 3'-dephospho-CoA + ATP = ADP + CoA + H(+). It functions in the pathway cofactor biosynthesis; coenzyme A biosynthesis; CoA from (R)-pantothenate: step 5/5. Catalyzes the phosphorylation of the 3'-hydroxyl group of dephosphocoenzyme A to form coenzyme A. The sequence is that of Dephospho-CoA kinase from Oceanobacillus iheyensis (strain DSM 14371 / CIP 107618 / JCM 11309 / KCTC 3954 / HTE831).